A 1222-amino-acid polypeptide reads, in one-letter code: Deubiquitinating protein VCPIP1 (1222 aa).

Residues 1–21 (MSQPPPPPPPLPPPPPPPEAP) show a composition bias toward pro residues. Residues 1 to 36 (MSQPPPPPPPLPPPPPPPEAPQTPSSLASAAASGGL) form a disordered region. Positions 25-36 (SSLASAAASGGL) are enriched in low complexity. Residues 208–361 (LIPVHVDGDG…RNHYIPLVGI (154 aa)) form the OTU domain. D216 is a catalytic residue. C219 (nucleophile) is an active-site residue. H354 is an active-site residue. K408 carries the post-translational modification N6-acetyllysine. 3 disordered regions span residues 725–776 (SVMQ…KEKK), 989–1009 (EATT…LGSG), and 1024–1074 (AFQG…VFTA). Residues S747 and S757 each carry the phosphoserine modification. Positions 755–771 (PSSAPATPTKAPYSPTT) are enriched in low complexity. T763 bears the Phosphothreonine mark. 3 positions are modified to phosphoserine: S768, S994, and S998. Basic and acidic residues predominate over residues 1041–1050 (LDPRARETSV). A compositionally biased stretch (polar residues) spans 1057-1074 (GTDFSNSSTKTEPSVFTA). S1077 carries the post-translational modification Phosphoserine. Disordered regions lie at residues 1113–1175 (VSSI…TETT) and 1188–1222 (ATRS…MDHS). The segment covering 1143–1157 (VVSSSAKSGSLQTGL) has biased composition (polar residues). Residues 1163–1175 (LTGGTENLNTETT) show a composition bias toward low complexity. Position 1198 is a phosphoserine (S1198). Residues 1200–1209 (EELEEMDSQD) show a composition bias toward acidic residues. Phosphoserine; by ATM is present on S1207. Positions 1210-1222 (AEMTNTTEPMDHS) are enriched in polar residues.

Binds VCP and the ternary complex containing STX5A, NSFL1C and VCP. In terms of processing, phosphorylated at Ser-1207 by ATM or ATR following induction of covalent DNA-protein cross-links (DPCs).

The protein localises to the nucleus. The protein resides in the cytoplasm. It localises to the endoplasmic reticulum. It is found in the golgi apparatus. Its subcellular location is the golgi stack. It catalyses the reaction Thiol-dependent hydrolysis of ester, thioester, amide, peptide and isopeptide bonds formed by the C-terminal Gly of ubiquitin (a 76-residue protein attached to proteins as an intracellular targeting signal).. Deubiquitinating enzyme involved in DNA repair and reassembly of the Golgi apparatus and the endoplasmic reticulum following mitosis. Necessary for VCP-mediated reassembly of Golgi stacks after mitosis. Plays a role in VCP-mediated formation of transitional endoplasmic reticulum (tER). Mediates dissociation of the ternary complex containing STX5A, NSFL1C and VCP. Also involved in DNA repair following phosphorylation by ATM or ATR: acts by catalyzing deubiquitination of SPRTN, thereby promoting SPRTN recruitment to chromatin and subsequent proteolytic cleavage of covalent DNA-protein cross-links (DPCs). Hydrolyzes 'Lys-11'- and 'Lys-48'-linked polyubiquitin chains. Functionally, (Microbial infection) Regulates the duration of C.botulinum neurotoxin type A (BoNT/A) intoxication by catalyzing deubiquitination of Botulinum neurotoxin A light chain (LC), thereby preventing LC degradation by the proteasome, and accelerating botulinum neurotoxin intoxication in patients. This chain is Deubiquitinating protein VCPIP1, found in Homo sapiens (Human).